We begin with the raw amino-acid sequence, 183 residues long: Adenylate kinase (183 aa).

An ATP-binding site is contributed by 12–17 (GAGKGT). The tract at residues 32 to 61 (STGDLLRAEVSAGSALGQEAESVMNRGELV) is NMP. Residues threonine 33, arginine 38, 59–61 (ELV), 86–89 (GFPR), and glutamine 93 each bind AMP. Positions 127–133 (SRGRDDD) are LID. Arginine 128 serves as a coordination point for ATP. The AMP site is built by arginine 130 and arginine 141. An ATP-binding site is contributed by glycine 169.

The protein belongs to the adenylate kinase family. In terms of assembly, monomer.

The protein localises to the cytoplasm. It catalyses the reaction AMP + ATP = 2 ADP. It functions in the pathway purine metabolism; AMP biosynthesis via salvage pathway; AMP from ADP: step 1/1. Its function is as follows. Catalyzes the reversible transfer of the terminal phosphate group between ATP and AMP. Plays an important role in cellular energy homeostasis and in adenine nucleotide metabolism. The chain is Adenylate kinase from Synechococcus sp. (strain CC9311).